A 122-amino-acid polypeptide reads, in one-letter code: Holo-[acyl-carrier-protein] synthase (122 aa).

Mg(2+) contacts are provided by aspartate 8 and glutamate 58.

It belongs to the P-Pant transferase superfamily. AcpS family. It depends on Mg(2+) as a cofactor.

Its subcellular location is the cytoplasm. The enzyme catalyses apo-[ACP] + CoA = holo-[ACP] + adenosine 3',5'-bisphosphate + H(+). Its function is as follows. Transfers the 4'-phosphopantetheine moiety from coenzyme A to a Ser of acyl-carrier-protein. The polypeptide is Holo-[acyl-carrier-protein] synthase (Levilactobacillus brevis (strain ATCC 367 / BCRC 12310 / CIP 105137 / JCM 1170 / LMG 11437 / NCIMB 947 / NCTC 947) (Lactobacillus brevis)).